The sequence spans 326 residues: Acetyl-coenzyme A carboxylase carboxyl transferase subunit beta (326 aa).

The CoA carboxyltransferase N-terminal domain occupies L32–N301. 4 residues coordinate Zn(2+): C36, C39, C55, and C58. The C4-type zinc finger occupies C36–C58.

It belongs to the AccD/PCCB family. As to quaternary structure, acetyl-CoA carboxylase is a heterohexamer composed of biotin carboxyl carrier protein (AccB), biotin carboxylase (AccC) and two subunits each of ACCase subunit alpha (AccA) and ACCase subunit beta (AccD). It depends on Zn(2+) as a cofactor.

The protein resides in the cytoplasm. The enzyme catalyses N(6)-carboxybiotinyl-L-lysyl-[protein] + acetyl-CoA = N(6)-biotinyl-L-lysyl-[protein] + malonyl-CoA. The protein operates within lipid metabolism; malonyl-CoA biosynthesis; malonyl-CoA from acetyl-CoA: step 1/1. In terms of biological role, component of the acetyl coenzyme A carboxylase (ACC) complex. Biotin carboxylase (BC) catalyzes the carboxylation of biotin on its carrier protein (BCCP) and then the CO(2) group is transferred by the transcarboxylase to acetyl-CoA to form malonyl-CoA. This chain is Acetyl-coenzyme A carboxylase carboxyl transferase subunit beta, found in Synechocystis sp. (strain ATCC 27184 / PCC 6803 / Kazusa).